The primary structure comprises 577 residues: Acyl-coenzyme A synthetase ACSM1, mitochondrial (577 aa).

The N-terminal 31 residues, 1–31 (MQWLMRFRTLWGIHKSFHNIHPAPSQLRCRS), are a transit peptide targeting the mitochondrion. Position 85 is an N6-succinyllysine (lysine 85). Position 146 is an N6-acetyllysine; alternate (lysine 146). Lysine 146 is subject to N6-succinyllysine; alternate. Lysine 183 is modified (N6-succinyllysine). Position 204 is an N6-acetyllysine; alternate (lysine 204). Lysine 204 carries the post-translational modification N6-succinyllysine; alternate. An N6-acetyllysine modification is found at lysine 214. 226 to 234 (TSGTTGFPK) contacts ATP. An N6-succinyllysine modification is found at lysine 237. N6-acetyllysine; alternate is present on residues lysine 356 and lysine 391. 2 positions are modified to N6-succinyllysine; alternate: lysine 356 and lysine 391. 2 residues coordinate ATP: aspartate 452 and arginine 467. Lysine 531 bears the N6-acetyllysine mark. The residue at position 538 (lysine 538) is an N6-acetyllysine; alternate. Position 538 is an N6-succinyllysine; alternate (lysine 538). N6-acetyllysine is present on lysine 549. Lysine 563 contacts ATP.

The protein belongs to the ATP-dependent AMP-binding enzyme family. Monomer. It depends on Mg(2+) as a cofactor. The cofactor is Mn(2+).

The protein resides in the mitochondrion matrix. It localises to the mitochondrion. The enzyme catalyses a medium-chain fatty acid + ATP + CoA = a medium-chain fatty acyl-CoA + AMP + diphosphate. It catalyses the reaction benzoate + ATP + CoA = benzoyl-CoA + AMP + diphosphate. The catalysed reaction is (R)-lipoate + GTP + H(+) = (R)-lipoyl-GMP + diphosphate. It carries out the reaction octanoate + ATP + CoA = octanoyl-CoA + AMP + diphosphate. The enzyme catalyses decanoate + ATP + CoA = decanoyl-CoA + AMP + diphosphate. It catalyses the reaction dodecanoate + ATP + CoA = dodecanoyl-CoA + AMP + diphosphate. The catalysed reaction is tetradecanoate + ATP + CoA = tetradecanoyl-CoA + AMP + diphosphate. It carries out the reaction hexanoate + ATP + CoA = hexanoyl-CoA + AMP + diphosphate. The enzyme catalyses butanoate + ATP + CoA = butanoyl-CoA + AMP + diphosphate. It catalyses the reaction hexadecanoate + ATP + CoA = hexadecanoyl-CoA + AMP + diphosphate. With respect to regulation, activated by monovalent cations, such as potassium, rubidium or ammonium. Functionally, catalyzes the activation of fatty acids by CoA to produce an acyl-CoA, the first step in fatty acid metabolism. Capable of activating medium-chain fatty acids (e.g. butyric (C4) to decanoic (C10) acids), and certain carboxylate-containing xenobiotics, e.g. benzoate. Also catalyzes the activation of lipoate to lipoyl-nucleoside monophosphate. Activates lipoate with GTP at a 1000-fold higher rate than with ATP and activates both (R)- and (S)-lipoate to the respective lipoyl-GMP, with a preference for (R)-lipoate. The protein is Acyl-coenzyme A synthetase ACSM1, mitochondrial (ACSM1) of Homo sapiens (Human).